An 87-amino-acid chain; its full sequence is Cell division protein ZapA (87 aa).

Residues 64 to 87 (VHDYIKLKEEYDRLLQKLHKEKDE) are a coiled coil.

This sequence belongs to the ZapA family. Type 2 subfamily. As to quaternary structure, homodimer. Interacts with FtsZ.

The protein localises to the cytoplasm. Activator of cell division through the inhibition of FtsZ GTPase activity, therefore promoting FtsZ assembly into bundles of protofilaments necessary for the formation of the division Z ring. It is recruited early at mid-cell but it is not essential for cell division. The polypeptide is Cell division protein ZapA (Geobacillus sp. (strain WCH70)).